Consider the following 371-residue polypeptide: Alanine racemase (371 aa).

Lys-35 (proton acceptor; specific for D-alanine) is an active-site residue. Lys-35 bears the N6-(pyridoxal phosphate)lysine mark. Residue Arg-130 participates in substrate binding. Tyr-256 serves as the catalytic Proton acceptor; specific for L-alanine. Substrate is bound at residue Met-304.

This sequence belongs to the alanine racemase family. It depends on pyridoxal 5'-phosphate as a cofactor.

The catalysed reaction is L-alanine = D-alanine. Its pathway is amino-acid biosynthesis; D-alanine biosynthesis; D-alanine from L-alanine: step 1/1. Its function is as follows. Catalyzes the interconversion of L-alanine and D-alanine. May also act on other amino acids. The chain is Alanine racemase (alr) from Verminephrobacter eiseniae (strain EF01-2).